Reading from the N-terminus, the 84-residue chain is MSSGGLLLLLGLLTLWAELTPISGHDRPTFCNLAPESGRCRGHLRRIYYNLESNKCKVFFYGGCGGNANNFETRDECRQTCGGK.

The first 24 residues, 1 to 24, serve as a signal peptide directing secretion; that stretch reads MSSGGLLLLLGLLTLWAELTPISG. The BPTI/Kunitz inhibitor domain occupies 31–81; it reads CNLAPESGRCRGHLRRIYYNLESNKCKVFFYGGCGGNANNFETRDECRQTC. 3 disulfide bridges follow: Cys31-Cys81, Cys40-Cys64, and Cys56-Cys77.

This sequence belongs to the venom Kunitz-type family. As to expression, expressed by the venom gland.

Its subcellular location is the secreted. Serine protease inhibitor. The polypeptide is Kunitz-type serine protease inhibitor 1 (Daboia russelii (Russel's viper)).